Consider the following 403-residue polypeptide: Argininosuccinate synthase (403 aa).

8-16 (AYSGGLDTS) contributes to the ATP binding site. Position 87 (Tyr-87) interacts with L-citrulline. Gly-117 provides a ligand contact to ATP. Residues Thr-119, Asn-123, and Asp-124 each contribute to the L-aspartate site. Asn-123 is an L-citrulline binding site. L-citrulline is bound by residues Arg-127, Ser-175, Glu-259, and Tyr-271.

Belongs to the argininosuccinate synthase family. Type 1 subfamily. In terms of assembly, homotetramer.

It is found in the cytoplasm. The enzyme catalyses L-citrulline + L-aspartate + ATP = 2-(N(omega)-L-arginino)succinate + AMP + diphosphate + H(+). It functions in the pathway amino-acid biosynthesis; L-arginine biosynthesis; L-arginine from L-ornithine and carbamoyl phosphate: step 2/3. In Salinispora arenicola (strain CNS-205), this protein is Argininosuccinate synthase.